A 127-amino-acid chain; its full sequence is Large ribosomal subunit protein bL19 (127 aa).

Belongs to the bacterial ribosomal protein bL19 family.

Functionally, this protein is located at the 30S-50S ribosomal subunit interface and may play a role in the structure and function of the aminoacyl-tRNA binding site. The chain is Large ribosomal subunit protein bL19 from Jannaschia sp. (strain CCS1).